The primary structure comprises 354 residues: DNA repair protein rhp57 (354 aa).

100–107 (GESGSGKS) provides a ligand contact to ATP.

It belongs to the RecA family.

The protein localises to the nucleus. In terms of biological role, involved in recombination DNA repair and in the repair of gamma-ray-induced damage. The chain is DNA repair protein rhp57 (rhp57) from Schizosaccharomyces pombe (strain 972 / ATCC 24843) (Fission yeast).